The chain runs to 1504 residues: DNA-directed RNA polymerase subunit beta' (1504 aa).

Zn(2+)-binding residues include Cys60, Cys62, Cys75, and Cys78. Residues 265 to 294 (RKQRDLEDAEQLTGAERERKEYEASQERER) form a disordered region. Over residues 279-294 (AERERKEYEASQERER) the composition is skewed to basic and acidic residues. Mg(2+) contacts are provided by Asp626, Asp628, and Asp630. 4 residues coordinate Zn(2+): Cys1002, Cys1075, Cys1082, and Cys1085. Residues 1468–1504 (RALIGGDGDDGERNNGDFDDQVGEDVVIPPDDDDQEA) are disordered.

This sequence belongs to the RNA polymerase beta' chain family. As to quaternary structure, the RNAP catalytic core consists of 2 alpha, 1 beta, 1 beta' and 1 omega subunit. When a sigma factor is associated with the core the holoenzyme is formed, which can initiate transcription. Mg(2+) is required as a cofactor. It depends on Zn(2+) as a cofactor.

It catalyses the reaction RNA(n) + a ribonucleoside 5'-triphosphate = RNA(n+1) + diphosphate. Its function is as follows. DNA-dependent RNA polymerase catalyzes the transcription of DNA into RNA using the four ribonucleoside triphosphates as substrates. The polypeptide is DNA-directed RNA polymerase subunit beta' (Roseiflexus sp. (strain RS-1)).